Consider the following 398-residue polypeptide: Dual specificity mitogen-activated protein kinase kinase 2 (398 aa).

The disordered stretch occupies residues 1–29 (MPAKRKPVLPALTITPSPAEGPGPGGSAE). Residues 70 to 367 (FERISELGAG…LKMLMNHTFI (298 aa)) form the Protein kinase domain. Residues 76-84 (LGAGNGGVV) and Lys99 contribute to the ATP site. The active-site Proton acceptor is the Asp192. Residues Ser220 and Ser224 each carry the phosphoserine; by RAF modification.

It belongs to the protein kinase superfamily. STE Ser/Thr protein kinase family. MAP kinase kinase subfamily. Activated by phosphorylation on Ser/Thr catalyzed by MAP kinase kinase kinases (RAF).

The enzyme catalyses L-seryl-[protein] + ATP = O-phospho-L-seryl-[protein] + ADP + H(+). It catalyses the reaction L-threonyl-[protein] + ATP = O-phospho-L-threonyl-[protein] + ADP + H(+). The catalysed reaction is L-tyrosyl-[protein] + ATP = O-phospho-L-tyrosyl-[protein] + ADP + H(+). Catalyzes the concomitant phosphorylation of a threonine and a tyrosine residue in a Thr-Glu-Tyr sequence located in MAP kinases. Activates the ERK1 and ERK2 MAP kinases. The protein is Dual specificity mitogen-activated protein kinase kinase 2 (MAP2K2) of Gallus gallus (Chicken).